The primary structure comprises 280 residues: Probable formate transporter (280 aa).

The next 6 helical transmembrane spans lie at 33–49, 67–83, 116–133, 177–195, 204–219, and 253–272; these read LSFVAGAYIAFGGLLAE, LVFGGVFPVGLMLVVIA, SWVFNLVGALFVAYVLAY, FWRAIGCNWLVCLAVYLAV, SFGIWFPIMAFVCIGF, and LGNIVGGAIFVGCIYWFTYL.

It belongs to the FNT transporter (TC 1.A.16) family.

The protein resides in the cell membrane. Functionally, may act as a formate transporter. In Methanobacterium formicicum, this protein is Probable formate transporter (fdhC).